A 274-amino-acid chain; its full sequence is Undecaprenyl-diphosphatase (274 aa).

Transmembrane regions (helical) follow at residues 6 to 26, 45 to 65, 94 to 114, 117 to 137, 155 to 174, 191 to 211, 223 to 243, and 253 to 273; these read SLFIAFVLGVVEGLTEFLPVS, AKTFEVIIQLGSILAVVVMFW, GHILLAMIPAVVLGLLFHDVI, LFAPKNVMYALVVGGFLLLAA, YRQAFMIGCFQCLALWPGFS, YAAAEFSFILAVPMMIGASGL, GDLPMFAVGFATAFVVALIAI, and ISFVPFAIYRFIVAGVVYMVF.

This sequence belongs to the UppP family.

The protein resides in the cell inner membrane. The catalysed reaction is di-trans,octa-cis-undecaprenyl diphosphate + H2O = di-trans,octa-cis-undecaprenyl phosphate + phosphate + H(+). Catalyzes the dephosphorylation of undecaprenyl diphosphate (UPP). Confers resistance to bacitracin. This is Undecaprenyl-diphosphatase from Serratia proteamaculans (strain 568).